A 372-amino-acid polypeptide reads, in one-letter code: tRNA-specific 2-thiouridylase MnmA (372 aa).

Residues 16-23 (GMSGGVDS) and methionine 42 contribute to the ATP site. Positions 102–104 (NPD) are interaction with target base in tRNA. The active-site Nucleophile is cysteine 107. Residues cysteine 107 and cysteine 205 are joined by a disulfide bond. Glycine 132 serves as a coordination point for ATP. The interval 155 to 157 (KDQ) is interaction with tRNA. The active-site Cysteine persulfide intermediate is cysteine 205. The tract at residues 317–318 (RY) is interaction with tRNA.

The protein belongs to the MnmA/TRMU family.

The protein localises to the cytoplasm. It catalyses the reaction S-sulfanyl-L-cysteinyl-[protein] + uridine(34) in tRNA + AH2 + ATP = 2-thiouridine(34) in tRNA + L-cysteinyl-[protein] + A + AMP + diphosphate + H(+). Catalyzes the 2-thiolation of uridine at the wobble position (U34) of tRNA, leading to the formation of s(2)U34. The chain is tRNA-specific 2-thiouridylase MnmA from Shewanella oneidensis (strain ATCC 700550 / JCM 31522 / CIP 106686 / LMG 19005 / NCIMB 14063 / MR-1).